The primary structure comprises 244 residues: Probable transcriptional regulatory protein DR_2548 (244 aa).

The segment at 1–23 (MAGHSKWAQIKRKKGANDKKRSA) is disordered.

It belongs to the TACO1 family.

It localises to the cytoplasm. This chain is Probable transcriptional regulatory protein DR_2548, found in Deinococcus radiodurans (strain ATCC 13939 / DSM 20539 / JCM 16871 / CCUG 27074 / LMG 4051 / NBRC 15346 / NCIMB 9279 / VKM B-1422 / R1).